Here is a 310-residue protein sequence, read N- to C-terminus: MKLAFMGTPDFSVPVLAEILAAGHEVVAVYSQPPRKAGRGMAEQPSPVHRFAEEHGIPVFTPVSLKGEAEQQAFASLDLDVAVVVAYGLILPKPVLEAPRLGCLNLHASLLPRWRGAAPIQRAIMAGDAETGVMVMQMEEGLDTGPVLLAERVAIAPDETAGGLHDRLSHIGASLMVRALAALSRGGLAAAPQPEEGVTYARKIEKAEARIDWRRPANELDCHIRGLTPFPGAFFEIARGGETIRVKILRAKPVAKSGEPGKVLDAGESIIIACGEGALEISGLQRAGKAAVTARDFLRGFALKPGESVA.

Residue 109–112 (SLLP) coordinates (6S)-5,6,7,8-tetrahydrofolate.

The protein belongs to the Fmt family.

The catalysed reaction is L-methionyl-tRNA(fMet) + (6R)-10-formyltetrahydrofolate = N-formyl-L-methionyl-tRNA(fMet) + (6S)-5,6,7,8-tetrahydrofolate + H(+). Functionally, attaches a formyl group to the free amino group of methionyl-tRNA(fMet). The formyl group appears to play a dual role in the initiator identity of N-formylmethionyl-tRNA by promoting its recognition by IF2 and preventing the misappropriation of this tRNA by the elongation apparatus. This chain is Methionyl-tRNA formyltransferase, found in Parvibaculum lavamentivorans (strain DS-1 / DSM 13023 / NCIMB 13966).